Consider the following 79-residue polypeptide: UPF0337 protein YhjA (79 aa).

Positions 1 to 30 are disordered; it reads MALNDKLDATKDKVSGKVKETTGKVTGDEK.

The protein belongs to the UPF0337 (CsbD) family.

This Lactococcus lactis subsp. lactis (strain IL1403) (Streptococcus lactis) protein is UPF0337 protein YhjA (yhjA).